We begin with the raw amino-acid sequence, 127 residues long: Major sperm protein 78 (127 aa).

An N-acetylalanine modification is found at A2. One can recognise an MSP domain in the interval 9–126 (DIQTQPGTKI…RRKNLPIEYN (118 aa)).

As to expression, sperm.

Its subcellular location is the cell projection. The protein localises to the pseudopodium. It localises to the cytoplasm. It is found in the cytoskeleton. In terms of biological role, central component in molecular interactions underlying sperm crawling. Forms an extensive filament system that extends from sperm villipoda, along the leading edge of the pseudopod. The polypeptide is Major sperm protein 78 (msp-78) (Caenorhabditis elegans).